The sequence spans 194 residues: ATP-dependent Clp protease proteolytic subunit 1 (194 aa).

The active-site Nucleophile is Ser98. His123 is an active-site residue.

Belongs to the peptidase S14 family. Fourteen ClpP subunits assemble into 2 heptameric rings which stack back to back to give a disk-like structure with a central cavity, resembling the structure of eukaryotic proteasomes.

Its subcellular location is the cytoplasm. It carries out the reaction Hydrolysis of proteins to small peptides in the presence of ATP and magnesium. alpha-casein is the usual test substrate. In the absence of ATP, only oligopeptides shorter than five residues are hydrolyzed (such as succinyl-Leu-Tyr-|-NHMec, and Leu-Tyr-Leu-|-Tyr-Trp, in which cleavage of the -Tyr-|-Leu- and -Tyr-|-Trp bonds also occurs).. Its function is as follows. Cleaves peptides in various proteins in a process that requires ATP hydrolysis. Has a chymotrypsin-like activity. Plays a major role in the degradation of misfolded proteins. ClpXP1 is involved in the complete degradation of the Site-2 clipped anti-sigma-W factor RsiW. This results in the release of SigW and the transcription activation of the genes under the control of the sigma-W factor. In Halalkalibacterium halodurans (strain ATCC BAA-125 / DSM 18197 / FERM 7344 / JCM 9153 / C-125) (Bacillus halodurans), this protein is ATP-dependent Clp protease proteolytic subunit 1.